The following is a 156-amino-acid chain: ATP synthase subunit b (156 aa).

A helical membrane pass occupies residues 5 to 27 (ITLIGQMITFAIFVGFTMKFVWP).

It belongs to the ATPase B chain family. In terms of assembly, F-type ATPases have 2 components, F(1) - the catalytic core - and F(0) - the membrane proton channel. F(1) has five subunits: alpha(3), beta(3), gamma(1), delta(1), epsilon(1). F(0) has three main subunits: a(1), b(2) and c(10-14). The alpha and beta chains form an alternating ring which encloses part of the gamma chain. F(1) is attached to F(0) by a central stalk formed by the gamma and epsilon chains, while a peripheral stalk is formed by the delta and b chains.

It is found in the cell inner membrane. Its function is as follows. F(1)F(0) ATP synthase produces ATP from ADP in the presence of a proton or sodium gradient. F-type ATPases consist of two structural domains, F(1) containing the extramembraneous catalytic core and F(0) containing the membrane proton channel, linked together by a central stalk and a peripheral stalk. During catalysis, ATP synthesis in the catalytic domain of F(1) is coupled via a rotary mechanism of the central stalk subunits to proton translocation. Component of the F(0) channel, it forms part of the peripheral stalk, linking F(1) to F(0). This is ATP synthase subunit b from Francisella tularensis subsp. tularensis (strain WY96-3418).